Here is a 454-residue protein sequence, read N- to C-terminus: Diaminobutyrate--2-oxoglutarate aminotransferase (454 aa).

N6-(pyridoxal phosphate)lysine is present on Lys287.

This sequence belongs to the class-III pyridoxal-phosphate-dependent aminotransferase family. Requires pyridoxal 5'-phosphate as cofactor.

The enzyme catalyses L-2,4-diaminobutanoate + 2-oxoglutarate = L-aspartate 4-semialdehyde + L-glutamate. Its pathway is amine and polyamine biosynthesis; 1,3-diaminopropane biosynthesis; 1,3-diaminopropane from L-aspartate 4-semialdehyde: step 1/2. In Haemophilus influenzae (strain ATCC 51907 / DSM 11121 / KW20 / Rd), this protein is Diaminobutyrate--2-oxoglutarate aminotransferase (dat).